A 163-amino-acid chain; its full sequence is Phosphopantetheine adenylyltransferase (163 aa).

Residue serine 9 coordinates substrate. ATP-binding positions include 9 to 10 and histidine 17; that span reads SF. Lysine 41, leucine 73, and lysine 87 together coordinate substrate. ATP contacts are provided by residues 88 to 90, glutamate 98, and 124 to 130; these read GLR and YTYVSST.

This sequence belongs to the bacterial CoaD family. In terms of assembly, homohexamer. The cofactor is Mg(2+).

It is found in the cytoplasm. It catalyses the reaction (R)-4'-phosphopantetheine + ATP + H(+) = 3'-dephospho-CoA + diphosphate. Its pathway is cofactor biosynthesis; coenzyme A biosynthesis; CoA from (R)-pantothenate: step 4/5. Functionally, reversibly transfers an adenylyl group from ATP to 4'-phosphopantetheine, yielding dephospho-CoA (dPCoA) and pyrophosphate. In Fusobacterium nucleatum subsp. nucleatum (strain ATCC 25586 / DSM 15643 / BCRC 10681 / CIP 101130 / JCM 8532 / KCTC 2640 / LMG 13131 / VPI 4355), this protein is Phosphopantetheine adenylyltransferase.